The sequence spans 192 residues: Immunoglobulin superfamily member 23 (192 aa).

The tract at residues 1 to 26 (MRAKPQSPLPRNPVPAWSPPTTTTDP) is disordered. The span at 7 to 18 (SPLPRNPVPAWS) shows a compositional bias: pro residues. In terms of domain architecture, Ig-like spans 20–128 (PTTTTDPMLE…QLVSEPVTIS (109 aa)). The N-linked (GlcNAc...) asparagine glycan is linked to N64. A helical transmembrane segment spans residues 158-178 (LLAAGILGAGALIAGMCFIII).

In terms of tissue distribution, expressed in bone and small intestine. Highly expressed in osteoclasts, and low expressed in osteoblasts and peripheral blood mononuclear cells (PBMCs).

Its subcellular location is the cell membrane. Functionally, may be involved in osteoclast differentiation. The sequence is that of Immunoglobulin superfamily member 23 from Homo sapiens (Human).